We begin with the raw amino-acid sequence, 253 residues long: Ubiquinone biosynthesis O-methyltransferase (253 aa).

S-adenosyl-L-methionine-binding residues include Arg47, Gly78, Asp99, and Met141.

The protein belongs to the methyltransferase superfamily. UbiG/COQ3 family.

It carries out the reaction a 3-demethylubiquinol + S-adenosyl-L-methionine = a ubiquinol + S-adenosyl-L-homocysteine + H(+). The enzyme catalyses a 3-(all-trans-polyprenyl)benzene-1,2-diol + S-adenosyl-L-methionine = a 2-methoxy-6-(all-trans-polyprenyl)phenol + S-adenosyl-L-homocysteine + H(+). Its pathway is cofactor biosynthesis; ubiquinone biosynthesis. O-methyltransferase that catalyzes the 2 O-methylation steps in the ubiquinone biosynthetic pathway. The sequence is that of Ubiquinone biosynthesis O-methyltransferase from Bradyrhizobium sp. (strain ORS 278).